Reading from the N-terminus, the 328-residue chain is Phosphate acetyltransferase (328 aa).

It belongs to the phosphate acetyltransferase and butyryltransferase family.

It localises to the cytoplasm. The enzyme catalyses acetyl-CoA + phosphate = acetyl phosphate + CoA. It functions in the pathway metabolic intermediate biosynthesis; acetyl-CoA biosynthesis; acetyl-CoA from acetate: step 2/2. This chain is Phosphate acetyltransferase (pta), found in Staphylococcus aureus (strain COL).